Here is a 235-residue protein sequence, read N- to C-terminus: Large ribosomal subunit protein uL1 (235 aa).

This sequence belongs to the universal ribosomal protein uL1 family. As to quaternary structure, part of the 50S ribosomal subunit.

Binds directly to 23S rRNA. The L1 stalk is quite mobile in the ribosome, and is involved in E site tRNA release. Functionally, protein L1 is also a translational repressor protein, it controls the translation of the L11 operon by binding to its mRNA. This Renibacterium salmoninarum (strain ATCC 33209 / DSM 20767 / JCM 11484 / NBRC 15589 / NCIMB 2235) protein is Large ribosomal subunit protein uL1.